A 122-amino-acid polypeptide reads, in one-letter code: Large ribosomal subunit protein uL14 (122 aa).

It belongs to the universal ribosomal protein uL14 family. Part of the 50S ribosomal subunit. Forms a cluster with proteins L3 and L19. In the 70S ribosome, L14 and L19 interact and together make contacts with the 16S rRNA in bridges B5 and B8.

Functionally, binds to 23S rRNA. Forms part of two intersubunit bridges in the 70S ribosome. The protein is Large ribosomal subunit protein uL14 of Phytoplasma mali (strain AT).